The sequence spans 462 residues: Protoheme IX farnesyltransferase, mitochondrial (462 aa).

Transmembrane regions (helical) follow at residues 152-172, 173-193, 237-257, 269-289, 296-316, 348-368, and 411-431; these read LTIL…YTVS, LPEL…ANAI, MLFL…IVLY, IINT…GWAA, PGAW…FNAL, SLLM…DWVF, and AKKL…LAML.

The protein belongs to the UbiA prenyltransferase family.

It localises to the mitochondrion membrane. Converts protoheme IX and farnesyl diphosphate to heme O. In Debaryomyces hansenii (strain ATCC 36239 / CBS 767 / BCRC 21394 / JCM 1990 / NBRC 0083 / IGC 2968) (Yeast), this protein is Protoheme IX farnesyltransferase, mitochondrial (COX10).